The following is a 180-amino-acid chain: Calcineurin subunit B type 1 (180 aa).

A lipid anchor (N-myristoyl glycine) is attached at glycine 2. 4 consecutive EF-hand domains span residues 25-60 (AELK…ALNP), 62-92 (LERV…LSHK), 94-129 (TKED…MVGT), and 135-170 (QLQQ…QEGI). Ca(2+)-binding residues include aspartate 38, aspartate 40, serine 42, threonine 44, glutamate 49, aspartate 70, asparagine 72, aspartate 74, glutamate 76, glutamate 81, aspartate 107, aspartate 109, aspartate 111, and glutamate 118. The tract at residues 138 to 143 (QIVDKT) is canA/calcineurin A binding. Ca(2+)-binding residues include aspartate 148, aspartate 150, aspartate 152, lysine 154, and glutamate 159.

Belongs to the calcineurin regulatory subunit family. In terms of assembly, forms a complex composed of a calmodulin-dependent catalytic subunit canA (also known as calcineurin A) and a regulatory Ca(2+)-binding subunit cnbA (also known as calcineurin B).

Functionally, regulatory subunit of calcineurin, a calcium-dependent, calmodulin stimulated protein phosphatase. Confers calcium sensitivity. Important for stalk formation. This Dictyostelium discoideum (Social amoeba) protein is Calcineurin subunit B type 1 (cnbA).